A 72-amino-acid polypeptide reads, in one-letter code: Brevinin-2GHb (72 aa).

The signal sequence occupies residues 1–22 (MFTMKKSLLLLFFLGTVSLSLC). A propeptide spanning residues 23 to 42 (EQERGADEDDGGEMTEELKR) is cleaved from the precursor. Cys-66 and Cys-72 are disulfide-bonded.

As to expression, expressed by the skin glands.

The protein resides in the secreted. Functionally, antimicrobial peptide. Active against the Gram-positive bacteria S.aureus FDA209P (MIC=16.5 ug/ml) and B.subtilis ATCC 6633 (MIC&gt;64 ug/ml), and the Gram-negative bacteria E.coli O111 (MIC=8.2 ug/ml) and E.coli ATCC 25922 (MIC=8.2 ug/ml). Not active against the fungus C.albicans. The chain is Brevinin-2GHb from Sylvirana guentheri (Gunther's frog).